We begin with the raw amino-acid sequence, 448 residues long: Carbon catabolite repressor protein 4 homolog 3 (448 aa).

Over residues 50–67 the composition is skewed to low complexity; that stretch reads SSTSGPSDSNPESSSNRS. The tract at residues 50-92 is disordered; the sequence is SSTSGPSDSNPESSSNRSYSRRWQNPLPRRQHPDQIPSSQIAR. E162 contacts Mg(2+).

Belongs to the CCR4/nocturin family. In terms of assembly, component of the CCR4-NOT complex, at least composed of CRR4 and CAF1 proteins. Requires Mg(2+) as cofactor.

Its subcellular location is the nucleus. The protein localises to the cytoplasm. The enzyme catalyses Exonucleolytic cleavage of poly(A) to 5'-AMP.. Functionally, acts as a catalytic component of the CCR4-NOT core complex, which in the nucleus seems to be a general transcription factor, and in the cytoplasm the major mRNA deadenylase involved in mRNA turnover. In Arabidopsis thaliana (Mouse-ear cress), this protein is Carbon catabolite repressor protein 4 homolog 3 (CCR4-3).